The primary structure comprises 253 residues: Methionine aminopeptidase (253 aa).

Residue H78 coordinates substrate. Positions 95, 106, and 169 each coordinate a divalent metal cation. Position 176 (H176) interacts with substrate. Residues E206 and E237 each coordinate a divalent metal cation.

This sequence belongs to the peptidase M24A family. Methionine aminopeptidase type 1 subfamily. As to quaternary structure, monomer. It depends on Co(2+) as a cofactor. Requires Zn(2+) as cofactor. Mn(2+) serves as cofactor. The cofactor is Fe(2+).

The enzyme catalyses Release of N-terminal amino acids, preferentially methionine, from peptides and arylamides.. Functionally, removes the N-terminal methionine from nascent proteins. The N-terminal methionine is often cleaved when the second residue in the primary sequence is small and uncharged (Met-Ala-, Cys, Gly, Pro, Ser, Thr, or Val). Requires deformylation of the N(alpha)-formylated initiator methionine before it can be hydrolyzed. The chain is Methionine aminopeptidase from Helicobacter pylori (strain ATCC 700392 / 26695) (Campylobacter pylori).